Reading from the N-terminus, the 100-residue chain is Putative PIN1-like protein (100 aa).

The span at 1–15 shows a compositional bias: basic and acidic residues; it reads MADEEKLPPGWEKRM. 2 disordered regions span residues 1 to 52 and 69 to 100; these read MADE…QGEP and LDLAAGNHPDQGGGPGADQRLHPEDQGRREGL. Positions 5 to 38 constitute a WW domain; the sequence is EKLPPGWEKRMSRPSGRGYYFNHITNPSQWERPS. The span at 27–44 shows a compositional bias: polar residues; sequence HITNPSQWERPSGNSSSG. The segment covering 87-100 has biased composition (basic and acidic residues); it reads QRLHPEDQGRREGL.

The protein is Putative PIN1-like protein (PIN1P1) of Homo sapiens (Human).